Reading from the N-terminus, the 134-residue chain is Small ribosomal subunit protein uS11 (134 aa).

Residues 114–134 (TPVPHNGTRPPRKWFKRQEKR) form a disordered region. A compositionally biased stretch (basic residues) spans 123–134 (PPRKWFKRQEKR).

The protein belongs to the universal ribosomal protein uS11 family. In terms of assembly, part of the 30S ribosomal subunit. Interacts with proteins S7 and S18. Binds to IF-3.

Located on the platform of the 30S subunit, it bridges several disparate RNA helices of the 16S rRNA. Forms part of the Shine-Dalgarno cleft in the 70S ribosome. This chain is Small ribosomal subunit protein uS11, found in Mesomycoplasma hyopneumoniae (strain 232) (Mycoplasma hyopneumoniae).